The chain runs to 285 residues: Putative alkaline ceramidase dcd3B (285 aa).

Helical transmembrane passes span 34–54 (TFSSFIITAFGVYGIFLMMSA), 77–97 (VLFSYLSLAIVGVGSAFYHAT), and 104–124 (LFDEFPMMLTASMFVYCILTI). A glycan (N-linked (GlcNAc...) asparagine) is linked at Asn-131. The next 4 membrane-spanning stretches (helical) occupy residues 141 to 161 (RFLPYILSLYVIVVAITITII), 166 to 186 (IILQSSFGLLIFSNVFLSYMY), 200 to 220 (PKKFLYLCIASMGIAYISWLT), and 236 to 256 (LHAVWHALTGLAGFYYIQFFI).

Belongs to the alkaline ceramidase family.

The protein localises to the membrane. In Dictyostelium discoideum (Social amoeba), this protein is Putative alkaline ceramidase dcd3B (dcd3B).